A 256-amino-acid polypeptide reads, in one-letter code: 1-(5-phosphoribosyl)-5-[(5-phosphoribosylamino)methylideneamino] imidazole-4-carboxamide isomerase (256 aa).

Asp-8 serves as the catalytic Proton acceptor. Asp-129 (proton donor) is an active-site residue.

This sequence belongs to the HisA/HisF family.

Its subcellular location is the cytoplasm. It carries out the reaction 1-(5-phospho-beta-D-ribosyl)-5-[(5-phospho-beta-D-ribosylamino)methylideneamino]imidazole-4-carboxamide = 5-[(5-phospho-1-deoxy-D-ribulos-1-ylimino)methylamino]-1-(5-phospho-beta-D-ribosyl)imidazole-4-carboxamide. It functions in the pathway amino-acid biosynthesis; L-histidine biosynthesis; L-histidine from 5-phospho-alpha-D-ribose 1-diphosphate: step 4/9. This Synechococcus sp. (strain CC9311) protein is 1-(5-phosphoribosyl)-5-[(5-phosphoribosylamino)methylideneamino] imidazole-4-carboxamide isomerase.